The sequence spans 344 residues: DNA integrity scanning protein DisA (344 aa).

One can recognise a DAC domain in the interval 1 to 133 (MALLAPGTPI…GRRYLIERPE (133 aa)). Residues Gly-61 and 92–96 (TRHRT) each bind ATP.

It belongs to the DisA family. Homooctamer. Requires Mg(2+) as cofactor.

It catalyses the reaction 2 ATP = 3',3'-c-di-AMP + 2 diphosphate. In terms of biological role, participates in a DNA-damage check-point. DisA forms globular foci that rapidly scan along the chromosomes searching for lesions. Its function is as follows. Also has diadenylate cyclase activity, catalyzing the condensation of 2 ATP molecules into cyclic di-AMP (c-di-AMP). c-di-AMP likely acts as a signaling molecule that may couple DNA integrity with a cellular process. This chain is DNA integrity scanning protein DisA, found in Cutibacterium acnes (strain DSM 16379 / KPA171202) (Propionibacterium acnes).